A 193-amino-acid polypeptide reads, in one-letter code: Ion-translocating oxidoreductase complex subunit A (193 aa).

The next 6 helical transmembrane spans lie at 5 to 25 (LLLFVGTVLVNNFVLVKFLGL), 47 to 67 (FVMTLASICAWLIDTWILIPL), 72 to 92 (LRTMAFILVIAVVVQFTEMVV), 102 to 122 (LLGIFLPLITTNCAVLGVALL), 134 to 154 (ALYGFSAAVGFSLVMVLFAAI), and 171 to 191 (AIALITAGLMSLAFMGFSGLV).

Belongs to the NqrDE/RnfAE family. The complex is composed of six subunits: RsxA, RsxB, RsxC, RsxD, RsxE and RsxG.

The protein resides in the cell inner membrane. Functionally, part of a membrane-bound complex that couples electron transfer with translocation of ions across the membrane. Required to maintain the reduced state of SoxR. This is Ion-translocating oxidoreductase complex subunit A from Escherichia coli O45:K1 (strain S88 / ExPEC).